Reading from the N-terminus, the 282-residue chain is NADPH-dependent 7-cyano-7-deazaguanine reductase (282 aa).

Residue 82 to 84 participates in substrate binding; the sequence is IES. 84–85 is an NADPH binding site; the sequence is SK. Residue Cys-189 is the Thioimide intermediate of the active site. Asp-196 acts as the Proton donor in catalysis. 228–229 serves as a coordination point for substrate; the sequence is HE. Residue 257-258 coordinates NADPH; the sequence is RG.

This sequence belongs to the GTP cyclohydrolase I family. QueF type 2 subfamily. In terms of assembly, homodimer.

It is found in the cytoplasm. The catalysed reaction is 7-aminomethyl-7-carbaguanine + 2 NADP(+) = 7-cyano-7-deazaguanine + 2 NADPH + 3 H(+). It participates in tRNA modification; tRNA-queuosine biosynthesis. Catalyzes the NADPH-dependent reduction of 7-cyano-7-deazaguanine (preQ0) to 7-aminomethyl-7-deazaguanine (preQ1). This is NADPH-dependent 7-cyano-7-deazaguanine reductase from Delftia acidovorans (strain DSM 14801 / SPH-1).